Here is a 359-residue protein sequence, read N- to C-terminus: (2E,6E)-farnesyl diphosphate synthase (359 aa).

Residues 1–21 are disordered; sequence MRGTDEKYGLPPQPDSDRMTR. Isopentenyl diphosphate-binding residues include Lys73, Arg76, and His105. Mg(2+) is bound by residues Asp112 and Asp116. Residues 112-116 carry the DDXXD motif motif; sequence DDLMD. Residue Arg121 participates in (2E)-geranyl diphosphate binding. Arg122 provides a ligand contact to isopentenyl diphosphate. (2E)-geranyl diphosphate is bound by residues Lys201, Thr202, and Gln239. The DDXXD motif motif lies at 242–246; that stretch reads DDLLG. (2E)-geranyl diphosphate-binding residues include Lys256 and Lys266.

Belongs to the FPP/GGPP synthase family. Mg(2+) serves as cofactor.

The protein resides in the cytoplasm. The catalysed reaction is isopentenyl diphosphate + (2E)-geranyl diphosphate = (2E,6E)-farnesyl diphosphate + diphosphate. Its pathway is isoprenoid biosynthesis; farnesyl diphosphate biosynthesis; farnesyl diphosphate from geranyl diphosphate and isopentenyl diphosphate. Its function is as follows. Catalyzes the condensation of isopentenyl pyrophosphate (IPP) with geranyl diphosphate (GPP) to yield (2E,6E)-farnesyl diphosphate (E,E-FPP). May be used for squalene and possibly sterol biosynthesis. This chain is (2E,6E)-farnesyl diphosphate synthase, found in Mycobacterium bovis (strain ATCC BAA-935 / AF2122/97).